Reading from the N-terminus, the 255-residue chain is Sushi domain-containing protein 3 (255 aa).

The tract at residues 1–25 (MRWAAATLRGKARPRGRAGVTTPAP) is disordered. Residues 1–103 (MRWAAATLRG…VPPHETFGFK (103 aa)) lie on the Extracellular side of the membrane. N-linked (GlcNAc...) asparagine glycosylation occurs at Asn-27. The region spanning 30-93 (GTCAKLRLPP…WSSGSPVCKL (64 aa)) is the Sushi domain. Cystine bridges form between Cys-32–Cys-75 and Cys-61–Cys-91. Residues 104–124 (VAVIASIVSCAIILLMSMAFL) form a helical membrane-spanning segment. Over 125–255 (TCCLLKCVKK…PQQPAAYALG (131 aa)) the chain is Cytoplasmic. Residues 173–255 (SGPSQAHDNH…PQQPAAYALG (83 aa)) are disordered. A compositionally biased stretch (basic and acidic residues) spans 179-191 (HDNHSFTTDHGES).

In terms of tissue distribution, highly expressed in estrogen receptor-positive breast tumors.

It localises to the cell membrane. Functionally, may play a role in breast tumorigenesis by promoting estrogen-dependent cell proliferation, cell-cell interactions and migration. This Homo sapiens (Human) protein is Sushi domain-containing protein 3 (SUSD3).